The chain runs to 377 residues: N-acetyldiaminopimelate deacetylase (377 aa).

The active site involves Asp-70. The Proton acceptor role is filled by Glu-129.

This sequence belongs to the peptidase M20A family. N-acetyldiaminopimelate deacetylase subfamily.

It catalyses the reaction N-acetyl-(2S,6S)-2,6-diaminopimelate + H2O = (2S,6S)-2,6-diaminopimelate + acetate. It functions in the pathway amino-acid biosynthesis; L-lysine biosynthesis via DAP pathway; LL-2,6-diaminopimelate from (S)-tetrahydrodipicolinate (acetylase route): step 3/3. Its function is as follows. Catalyzes the conversion of N-acetyl-diaminopimelate to diaminopimelate and acetate. This Geobacillus thermodenitrificans (strain NG80-2) protein is N-acetyldiaminopimelate deacetylase.